The primary structure comprises 284 residues: Bifunctional protein FolD (284 aa).

NADP(+)-binding positions include 165 to 167 (GRS) and Ser190.

This sequence belongs to the tetrahydrofolate dehydrogenase/cyclohydrolase family. As to quaternary structure, homodimer.

The enzyme catalyses (6R)-5,10-methylene-5,6,7,8-tetrahydrofolate + NADP(+) = (6R)-5,10-methenyltetrahydrofolate + NADPH. The catalysed reaction is (6R)-5,10-methenyltetrahydrofolate + H2O = (6R)-10-formyltetrahydrofolate + H(+). It participates in one-carbon metabolism; tetrahydrofolate interconversion. Functionally, catalyzes the oxidation of 5,10-methylenetetrahydrofolate to 5,10-methenyltetrahydrofolate and then the hydrolysis of 5,10-methenyltetrahydrofolate to 10-formyltetrahydrofolate. The protein is Bifunctional protein FolD of Streptococcus pyogenes serotype M28 (strain MGAS6180).